A 229-amino-acid polypeptide reads, in one-letter code: Golgi to ER traffic protein 1 (229 aa).

Residues 1–14 (MGILAALDLHPYTL) lie on the Lumenal side of the membrane. Residues 15–34 (VVSSFTVLLIQQLVGFIGKS) form a helical membrane-spanning segment. Residues 35 to 122 (TIQEFAWLFY…KINSLVGVVL (88 aa)) are Cytoplasmic-facing. Positions 60–117 (HTKKQEELHKLNREKRSISAQDEYAKWTKLNRQAEKLTAEVKSLSDDIAKDKSKINSL) form a coiled coil. A helical membrane pass occupies residues 123–143 (LFLTTLPLWVFRLWFRKSVLF). Residues 144-167 (YLPTGVFPYYVERVLAIPFFASGS) are Lumenal-facing. A helical transmembrane segment spans residues 168–184 (VGLTVWMFAVNNVISSV). The Cytoplasmic segment spans residues 185-229 (LFLLTFPFKPSVPIPIRQTKVEEVVPESAESKESSPEVIDIADAN). The segment covering 210-219 (PESAESKESS) has biased composition (basic and acidic residues). Positions 210–229 (PESAESKESSPEVIDIADAN) are disordered.

It belongs to the WRB/GET1 family. Component of the Golgi to ER traffic (GET) complex, which is composed of GET1, GET2 and GET3. Within the complex, GET1 and GET2 form a heterotetramer which is stabilized by phosphatidylinositol binding and which binds to the GET3 homodimer.

The protein localises to the endoplasmic reticulum membrane. The protein resides in the golgi apparatus membrane. Functionally, required for the post-translational delivery of tail-anchored (TA) proteins to the endoplasmic reticulum. Together with GET2, acts as a membrane receptor for soluble GET3, which recognizes and selectively binds the transmembrane domain of TA proteins in the cytosol. The GET complex cooperates with the HDEL receptor ERD2 to mediate the ATP-dependent retrieval of resident ER proteins that contain a C-terminal H-D-E-L retention signal from the Golgi to the ER. This chain is Golgi to ER traffic protein 1, found in Scheffersomyces stipitis (strain ATCC 58785 / CBS 6054 / NBRC 10063 / NRRL Y-11545) (Yeast).